A 493-amino-acid polypeptide reads, in one-letter code: Probable phospho-2-dehydro-3-deoxyheptonate aldolase, chloroplastic (493 aa).

Residues 1 to 58 (MAMSNTSALASKLLPSCKPHQPTLTFFSPSTTCQKKPRSSRPISAAVHVTQPPKTPIS) constitute a chloroplast transit peptide.

Belongs to the class-II DAHP synthase family.

The protein resides in the plastid. It is found in the chloroplast. The catalysed reaction is D-erythrose 4-phosphate + phosphoenolpyruvate + H2O = 7-phospho-2-dehydro-3-deoxy-D-arabino-heptonate + phosphate. It participates in metabolic intermediate biosynthesis; chorismate biosynthesis; chorismate from D-erythrose 4-phosphate and phosphoenolpyruvate: step 1/7. This chain is Probable phospho-2-dehydro-3-deoxyheptonate aldolase, chloroplastic (DHS1), found in Catharanthus roseus (Madagascar periwinkle).